Consider the following 481-residue polypeptide: MLLRLYNTKTKSLSEVKNFSDIKVYACGPTVYNYAHIGNFRTYIFEDLLIKSLRLLKYNVNYAMNITDIGHLTGEFDEGEDKVVKAARERGLTVYEISRFFTEAFFCDCEKLNIVRPDKVLIASEYIASMIEVIKVLEQNGFTYFVNGNVYFDTSLFKSYGQMAGINLNDFEFSSVSRVEVDPSKKNKSDFVLWFTNSKFKDQEMKWDSPWGFGYPSWHLECAAMNLDCFRSTLDIHLGGVDHIGVHHINEIAIAECYLNRMWCDIFVHGEFLIMEDEKMSKSNNNFITIQDLETNGFSPLDFRYFCLTAHYRTQLKFTFNNLRACKVARKNMLNKLTAVFSSLNQFDLLLLSKNYENIESVLEKRYYDSFLEKIAFDLSIPQALALLWDIIKDDNLSALSKLRLTFKFDEVLSLGLKEGVFREIEKDRINIDDAMNSLLEERRLAKIRKDFKRADEIREYFYSKGFVLIDTEEGTKVKRG.

Zn(2+) is bound at residue Cys27. The short motif at 29 to 39 is the 'HIGH' region element; it reads PTVYNYAHIGN. Zn(2+) is bound by residues Cys222, His247, and Glu251. The 'KMSKS' region signature appears at 279–283; sequence KMSKS. ATP is bound at residue Lys282.

It belongs to the class-I aminoacyl-tRNA synthetase family. In terms of assembly, monomer. It depends on Zn(2+) as a cofactor.

It localises to the cytoplasm. The enzyme catalyses tRNA(Cys) + L-cysteine + ATP = L-cysteinyl-tRNA(Cys) + AMP + diphosphate. The chain is Cysteine--tRNA ligase from Borrelia turicatae (strain 91E135).